The sequence spans 649 residues: Acetyl-coenzyme A synthetase (649 aa).

CoA is bound by residues 191–194 (RGGR), threonine 311, and asparagine 335. ATP is bound by residues 387 to 389 (GEP), 411 to 416 (DTWWQT), aspartate 500, and arginine 515. Serine 523 serves as a coordination point for CoA. Arginine 526 is an ATP binding site. Residues valine 537, phenylalanine 539, and isoleucine 542 each coordinate Mg(2+). Arginine 584 contacts CoA. Lysine 609 is subject to N6-acetyllysine.

Belongs to the ATP-dependent AMP-binding enzyme family. Mg(2+) is required as a cofactor. Post-translationally, acetylated. Deacetylation by the SIR2-homolog deacetylase activates the enzyme.

The enzyme catalyses acetate + ATP + CoA = acetyl-CoA + AMP + diphosphate. Catalyzes the conversion of acetate into acetyl-CoA (AcCoA), an essential intermediate at the junction of anabolic and catabolic pathways. AcsA undergoes a two-step reaction. In the first half reaction, AcsA combines acetate with ATP to form acetyl-adenylate (AcAMP) intermediate. In the second half reaction, it can then transfer the acetyl group from AcAMP to the sulfhydryl group of CoA, forming the product AcCoA. The sequence is that of Acetyl-coenzyme A synthetase from Vibrio cholerae serotype O1 (strain ATCC 39315 / El Tor Inaba N16961).